Here is a 343-residue protein sequence, read N- to C-terminus: UPF0283 membrane protein blr7254 (343 aa).

The next 3 membrane-spanning stretches (helical) occupy residues 64–84, 97–117, and 214–234; these read GALF…LGVV, LGFV…VVIG, and IVTA…VAAL.

The protein belongs to the UPF0283 family.

The protein resides in the cell inner membrane. The chain is UPF0283 membrane protein blr7254 from Bradyrhizobium diazoefficiens (strain JCM 10833 / BCRC 13528 / IAM 13628 / NBRC 14792 / USDA 110).